The following is a 270-amino-acid chain: Cell division protein DivIB (270 aa).

Topologically, residues 1 to 28 (MAENKRVISIENRIPELKKYRKKKLVRH) are cytoplasmic. Residues 29–49 (LAILIGIFVILIAITLYFLSP) traverse the membrane as a helical segment. The Extracellular segment spans residues 50-270 (LSKLDKIAVS…AAKEKKETNE (221 aa)). The POTRA domain maps to 51–119 (SKLDKIAVSG…NDVQINITEF (69 aa)).

It belongs to the FtsQ/DivIB family. DivIB subfamily.

It is found in the cell membrane. Functionally, cell division protein that may be involved in stabilizing or promoting the assembly of the division complex. This chain is Cell division protein DivIB, found in Listeria monocytogenes serovar 1/2a (strain ATCC BAA-679 / EGD-e).